Here is a 97-residue protein sequence, read N- to C-terminus: Secreted RxLR effector protein BLR05 (97 aa).

The N-terminal stretch at methionine 1–alanine 21 is a signal peptide. The RxLR-dEER signature appears at arginine 32 to aspartate 60. The helical transmembrane segment at isoleucine 69 to alanine 89 threads the bilayer.

This sequence belongs to the RxLR effector family. In terms of assembly, interacts with host transcription factor NAC069.

Its subcellular location is the secreted. The protein resides in the host endoplasmic reticulum membrane. Its function is as follows. Secreted effector that inhibits stress-induced relocalization of the transcription factor NAC069 to the nucleus, thus affecting its broad role in abiotic and biotic stress responses. The polypeptide is Secreted RxLR effector protein BLR05 (Bremia lactucae (Lettuce downy mildew)).